A 210-amino-acid polypeptide reads, in one-letter code: MRPRLWLLLAAQLAVLHGSSVLQQTPAYIKVQTNKMVMLSCEAKISLSNMRIYWLRQRQAPSSDSHHEFLALWDSAKGTIHSEEVEQEKVAVFRDASRFILNLTSVKPEDSGIYFCMIVGSPELTFGKGTQLSVVDFLPTTAQPTKKSTPKRRVCRLPRPETQKGPLCSPITLGLLVAGVLVLLVSLGVAIHLCCRRRRARLRFMKQFYK.

The signal sequence occupies residues 1–21 (MRPRLWLLLAAQLAVLHGSSV). The 111-residue stretch at 22-132 (LQQTPAYIKV…ELTFGKGTQL (111 aa)) folds into the Ig-like V-type domain. The Extracellular segment spans residues 22–170 (LQQTPAYIKV…ETQKGPLCSP (149 aa)). Cys-41 and Cys-116 form a disulfide bridge. An N-linked (GlcNAc...) asparagine glycan is attached at Asn-102. A helical transmembrane segment spans residues 171–191 (ITLGLLVAGVLVLLVSLGVAI). Residues 192-210 (HLCCRRRRARLRFMKQFYK) lie on the Cytoplasmic side of the membrane.

Forms disulfide-linked heterodimers with CD8A at the cell surface. Interacts with CD3D; this interaction couples TCR-CD3 with CD8. Interacts with LCK. Phosphorylated as a consequence of T-cell activation. Post-translationally, palmitoylated at the cytoplasmic tail and thereby targets the heterodimer CD8A/CD8B to lipid rafts unlike CD8A homodimers.

The protein resides in the cell membrane. Functionally, integral membrane glycoprotein that plays an essential role in the immune response and serves multiple functions in responses against both external and internal offenses. In T-cells, functions primarily as a coreceptor for MHC class I molecule:peptide complex. The antigens presented by class I peptides are derived from cytosolic proteins while class II derived from extracellular proteins. Interacts simultaneously with the T-cell receptor (TCR) and the MHC class I proteins presented by antigen presenting cells (APCs). In turn, recruits the Src kinase LCK to the vicinity of the TCR-CD3 complex. A palmitoylation site in the cytoplasmic tail of CD8B chain contributes to partitioning of CD8 into the plasma membrane lipid rafts where signaling proteins are enriched. Once LCK recruited, it initiates different intracellular signaling pathways by phosphorylating various substrates ultimately leading to lymphokine production, motility, adhesion and activation of cytotoxic T-lymphocytes (CTLs). Additionally, plays a critical role in thymic selection of CD8+ T-cells. This Pongo pygmaeus (Bornean orangutan) protein is T-cell surface glycoprotein CD8 beta chain (CD8B).